The chain runs to 482 residues: Aspartyl/glutamyl-tRNA(Asn/Gln) amidotransferase subunit B (482 aa).

It belongs to the GatB/GatE family. GatB subfamily. As to quaternary structure, heterotrimer of A, B and C subunits.

It carries out the reaction L-glutamyl-tRNA(Gln) + L-glutamine + ATP + H2O = L-glutaminyl-tRNA(Gln) + L-glutamate + ADP + phosphate + H(+). It catalyses the reaction L-aspartyl-tRNA(Asn) + L-glutamine + ATP + H2O = L-asparaginyl-tRNA(Asn) + L-glutamate + ADP + phosphate + 2 H(+). In terms of biological role, allows the formation of correctly charged Asn-tRNA(Asn) or Gln-tRNA(Gln) through the transamidation of misacylated Asp-tRNA(Asn) or Glu-tRNA(Gln) in organisms which lack either or both of asparaginyl-tRNA or glutaminyl-tRNA synthetases. The reaction takes place in the presence of glutamine and ATP through an activated phospho-Asp-tRNA(Asn) or phospho-Glu-tRNA(Gln). This chain is Aspartyl/glutamyl-tRNA(Asn/Gln) amidotransferase subunit B, found in Ehrlichia canis (strain Jake).